We begin with the raw amino-acid sequence, 204 residues long: Urease accessory protein UreG (204 aa).

Position 12 to 19 (12 to 19 (GPVGSGKT)) interacts with GTP.

It belongs to the SIMIBI class G3E GTPase family. UreG subfamily. As to quaternary structure, homodimer. UreD, UreF and UreG form a complex that acts as a GTP-hydrolysis-dependent molecular chaperone, activating the urease apoprotein by helping to assemble the nickel containing metallocenter of UreC. The UreE protein probably delivers the nickel.

It localises to the cytoplasm. Facilitates the functional incorporation of the urease nickel metallocenter. This process requires GTP hydrolysis, probably effectuated by UreG. The polypeptide is Urease accessory protein UreG (Hahella chejuensis (strain KCTC 2396)).